We begin with the raw amino-acid sequence, 64 residues long: Large ribosomal subunit protein bL35 (64 aa).

Residues 1–17 are compositionally biased toward basic residues; it reads MKQKTHSGIKKRIKKTG. A disordered region spans residues 1–64; the sequence is MKQKTHSGIK…KRVNRLLGEG (64 aa). The segment covering 21 to 33 has biased composition (basic and acidic residues); it reads LRREQANRRHLLE.

Belongs to the bacterial ribosomal protein bL35 family.

This is Large ribosomal subunit protein bL35 from Corynebacterium kroppenstedtii (strain DSM 44385 / JCM 11950 / CIP 105744 / CCUG 35717).